A 213-amino-acid polypeptide reads, in one-letter code: Adenylate kinase (213 aa).

Position 10–15 (10–15 (GSGKGT)) interacts with ATP. The segment at 30-59 (STGDLFRTNIENDTPLGKEIKQIVENGQLV) is NMP. AMP contacts are provided by residues threonine 31, arginine 36, 57–59 (QLV), 85–88 (GFPR), and glutamine 92. The LID stretch occupies residues 121-158 (GRRICQSCCKIFNIYTLPTKEKEICDFCQGILYQRKDD). Arginine 122 lines the ATP pocket. Residues cysteine 125 and cysteine 128 each contribute to the Zn(2+) site. 131-132 (IF) serves as a coordination point for ATP. Positions 145 and 148 each coordinate Zn(2+). Positions 155 and 166 each coordinate AMP. Residue lysine 194 coordinates ATP.

This sequence belongs to the adenylate kinase family. Monomer.

Its subcellular location is the cytoplasm. It catalyses the reaction AMP + ATP = 2 ADP. Its pathway is purine metabolism; AMP biosynthesis via salvage pathway; AMP from ADP: step 1/1. Catalyzes the reversible transfer of the terminal phosphate group between ATP and AMP. Plays an important role in cellular energy homeostasis and in adenine nucleotide metabolism. The protein is Adenylate kinase of Borrelia duttonii (strain Ly).